The following is a 231-amino-acid chain: MIIQKGKEHLAKDKQKSNLYLRILSGIVLVPSFVVAILWLKPLFYVLMILVAIGMLSEWYDMTHSSIMYLLIGLIIIPIPISLLIFLSSNPINNWLIMLYFCIVWSVDIFAMIGGKTLGGAKLAPKISPKKTWSGLITGILSAGLVATLISFIPSFYIENYYFSNRIYLFIISCTLALTAQLSDLFISYFKRKFNIKDSGNIIPGHGGVLDRFDSIILTAPILFFINGLYL.

6 helical membrane-spanning segments follow: residues 33 to 53 (FVVA…LVAI), 67 to 87 (IMYL…LIFL), 95 to 115 (WLIM…MIGG), 133 to 153 (WSGL…ISFI), 167 to 187 (IYLF…DLFI), and 206 to 226 (HGGV…LFFI).

The protein belongs to the CDS family.

The protein localises to the cell membrane. It catalyses the reaction a 1,2-diacyl-sn-glycero-3-phosphate + CTP + H(+) = a CDP-1,2-diacyl-sn-glycerol + diphosphate. Its pathway is phospholipid metabolism; CDP-diacylglycerol biosynthesis; CDP-diacylglycerol from sn-glycerol 3-phosphate: step 3/3. The polypeptide is Phosphatidate cytidylyltransferase (cdsA) (Rickettsia bellii (strain RML369-C)).